A 462-amino-acid polypeptide reads, in one-letter code: UDP-N-acetylmuramoylalanine--D-glutamate ligase (462 aa).

Gly111 to Thr117 is an ATP binding site.

This sequence belongs to the MurCDEF family.

Its subcellular location is the cytoplasm. It catalyses the reaction UDP-N-acetyl-alpha-D-muramoyl-L-alanine + D-glutamate + ATP = UDP-N-acetyl-alpha-D-muramoyl-L-alanyl-D-glutamate + ADP + phosphate + H(+). The protein operates within cell wall biogenesis; peptidoglycan biosynthesis. In terms of biological role, cell wall formation. Catalyzes the addition of glutamate to the nucleotide precursor UDP-N-acetylmuramoyl-L-alanine (UMA). The sequence is that of UDP-N-acetylmuramoylalanine--D-glutamate ligase from Trichodesmium erythraeum (strain IMS101).